The primary structure comprises 357 residues: Ribosomal RNA large subunit methyltransferase M (357 aa).

S-adenosyl-L-methionine-binding positions include Ser183, 216 to 219, Asp235, Asp255, and Asp271; that span reads APGG. Lys300 functions as the Proton acceptor in the catalytic mechanism.

This sequence belongs to the class I-like SAM-binding methyltransferase superfamily. RNA methyltransferase RlmE family. RlmM subfamily. In terms of assembly, monomer.

The protein resides in the cytoplasm. The catalysed reaction is cytidine(2498) in 23S rRNA + S-adenosyl-L-methionine = 2'-O-methylcytidine(2498) in 23S rRNA + S-adenosyl-L-homocysteine + H(+). Functionally, catalyzes the 2'-O-methylation at nucleotide C2498 in 23S rRNA. This is Ribosomal RNA large subunit methyltransferase M from Pseudomonas fluorescens (strain Pf0-1).